A 472-amino-acid chain; its full sequence is MSTKVELYMEIGTVITDLEYHTKYMLKKLLGRGAYAQCYLAEIESGEQYAMKVVRLKDIKSRKVHEKLESEIAIHSKLDNPNVVKMYRSFRSSEYVFMVLELCERGALDALLKRNGKLKERHVARFVKQTVEGLIYLHNSVSVVHRDLKLGNLFLDSKFNVKIGDFGLSAVIKDGEKKVTMCGTPNYIAPEVLFGKASGHSFEADIWSLGVIIYTLLVGVPPFQKKNVEDIYKMIKLNNYIFPENCDLSSEAIDLITQILNTNPLERPTLEHILSHKFLSKKEHFLMKIYRNLMTNRTEEGVVDTDYVLFSIPVTKLRGVGYVLKSGVYGIYFSDHRNLMLKPNRKSVIYLNSTIESGKRVFYKEEHLVEKIPAEIAESYKGLQYFIRTFDNGFSFLDVEPCFIVKIRKIECGFLFVMADSTIVFDFVDGWRVVLSRCGERVSCYNGLGLASFNQEIRGRCIEILRGCLGCG.

The region spanning 24-279 (YMLKKLLGRG…LEHILSHKFL (256 aa)) is the Protein kinase domain. Residues 30–38 (LGRGAYAQC) and K52 contribute to the ATP site. Residue D147 is the Proton acceptor of the active site. In terms of domain architecture, POLO box spans 307–392 (YVLFSIPVTK…LQYFIRTFDN (86 aa)).

The protein belongs to the protein kinase superfamily. Ser/Thr protein kinase family. CDC5/Polo subfamily.

It localises to the cytoplasm. The protein localises to the cytoskeleton. Its subcellular location is the microtubule organizing center. It is found in the spindle pole body. It carries out the reaction L-seryl-[protein] + ATP = O-phospho-L-seryl-[protein] + ADP + H(+). The enzyme catalyses L-threonyl-[protein] + ATP = O-phospho-L-threonyl-[protein] + ADP + H(+). Its function is as follows. Protein kinase required for the cell cycle where it is involved in mitotic exit. Required to form a bipolar spindle, the actin ring and septum. Functions upstream of the whole septum formation pathway, including actin ring formation (regulated by late septation genes) and septal material deposition (regulated by early septation genes). Behaves as a 'septum-promoting factor', and could also be involved in inducing other late events of cell division. The polypeptide is Probable cell cycle serine/threonine-protein kinase CDC5 homolog (CDC5) (Encephalitozoon cuniculi (strain GB-M1) (Microsporidian parasite)).